The chain runs to 226 residues: Cytochrome c biogenesis ATP-binding export protein CcmA (226 aa).

The region spanning 19–226 (LRANDLAFSR…LGGAHALPPA (208 aa)) is the ABC transporter domain. 51-58 (GPNGSGKS) is an ATP binding site.

This sequence belongs to the ABC transporter superfamily. CcmA exporter (TC 3.A.1.107) family. The complex is composed of two ATP-binding proteins (CcmA) and two transmembrane proteins (CcmB).

The protein localises to the cell inner membrane. The enzyme catalyses heme b(in) + ATP + H2O = heme b(out) + ADP + phosphate + H(+). Its function is as follows. Part of the ABC transporter complex CcmAB involved in the biogenesis of c-type cytochromes; once thought to export heme, this seems not to be the case, but its exact role is uncertain. Responsible for energy coupling to the transport system. This Cupriavidus pinatubonensis (strain JMP 134 / LMG 1197) (Cupriavidus necator (strain JMP 134)) protein is Cytochrome c biogenesis ATP-binding export protein CcmA.